The following is a 53-amino-acid chain: UPF0391 membrane protein Bcen2424_6479 (53 aa).

2 helical membrane-spanning segments follow: residues 5 to 25 (AIIF…GIAA) and 30 to 50 (IAKI…LLGV).

This sequence belongs to the UPF0391 family.

It is found in the cell membrane. The polypeptide is UPF0391 membrane protein Bcen2424_6479 (Burkholderia cenocepacia (strain HI2424)).